The sequence spans 191 residues: Elongation factor P-like protein (191 aa).

It belongs to the elongation factor P family.

The protein is Elongation factor P-like protein of Shewanella sediminis (strain HAW-EB3).